A 599-amino-acid chain; its full sequence is Protein ECM25 (599 aa).

The region spanning 181–359 (NRLTPLAIRQ…NLLDFFPEIA (179 aa)) is the Rho-GAP domain. Disordered regions lie at residues 362–447 (ISSP…PLPI), 468–495 (ASSS…SSTD), and 543–563 (ELQE…KFSQ). 3 stretches are compositionally biased toward low complexity: residues 363-373 (SSPPSSVSSSS), 396-413 (TLPR…TSPT), and 468-483 (ASSS…KTPS). Residues 543–562 (ELQEKKKKNETTSKTADKFS) show a composition bias toward basic and acidic residues.

The protein resides in the cytoplasm. May be involved in cell wall organization and biogenesis. In Saccharomyces cerevisiae (strain ATCC 204508 / S288c) (Baker's yeast), this protein is Protein ECM25 (ECM25).